Here is a 207-residue protein sequence, read N- to C-terminus: Dephospho-CoA kinase (207 aa).

The region spanning 5-203 (AVGLTGGIAC…ARYRALASVF (199 aa)) is the DPCK domain. 13–18 (ACGKSL) contributes to the ATP binding site.

This sequence belongs to the CoaE family.

Its subcellular location is the cytoplasm. The enzyme catalyses 3'-dephospho-CoA + ATP = ADP + CoA + H(+). It participates in cofactor biosynthesis; coenzyme A biosynthesis; CoA from (R)-pantothenate: step 5/5. Catalyzes the phosphorylation of the 3'-hydroxyl group of dephosphocoenzyme A to form coenzyme A. This chain is Dephospho-CoA kinase, found in Xylella fastidiosa (strain 9a5c).